The chain runs to 517 residues: Rop guanine nucleotide exchange factor 9 (517 aa).

Disordered stretches follow at residues 16–76 and 428–517; these read NLDR…SETE and GEET…KDRH. Positions 39-63 are enriched in polar residues; it reads MPESQTQDSLGGSPVETSRPMTSRL. A PRONE domain is found at 65 to 429; sequence SRRQDKQQSE…SLARKQCTGE (365 aa). The segment covering 66–76 has biased composition (basic and acidic residues); sequence RRQDKQQSETE. A compositionally biased stretch (polar residues) spans 440-452; the sequence is ETDSASAGSSNYS.

Interacts with ARAC11/ROP1 and ARAC10/ROP11. Interacts with PRK6. In terms of tissue distribution, expressed in pollen grains and pollen tubes.

The protein resides in the cell membrane. Its function is as follows. Guanine-nucleotide exchange factor (GEF) that acts as an activator of Rop (Rho of plants) GTPases by promoting the exchange of GDP for GTP. The sequence is that of Rop guanine nucleotide exchange factor 9 from Arabidopsis thaliana (Mouse-ear cress).